The sequence spans 122 residues: MIQQQTMLTVADNTGARKMMCIRVLGSSGRRYASLGDVIIGVVKDALPNMPVKKSDVVKAVVIRTVDTVRRPDGMCIRFDDNAAVIINNDGNPRGTRVFGPVARELREKNFTKIISLAPEVL.

It belongs to the universal ribosomal protein uL14 family. Part of the 50S ribosomal subunit. Forms a cluster with proteins L3 and L19. In the 70S ribosome, L14 and L19 interact and together make contacts with the 16S rRNA in bridges B5 and B8.

Its function is as follows. Binds to 23S rRNA. Forms part of two intersubunit bridges in the 70S ribosome. This Synechococcus sp. (strain JA-2-3B'a(2-13)) (Cyanobacteria bacterium Yellowstone B-Prime) protein is Large ribosomal subunit protein uL14.